The sequence spans 180 residues: MTALQSDLISAIRSIPDYPKPGVMFRDITTLLGNPRAFRRAIDELVHPYAGTKVDKVAGIEARGFILGGAIAHQLSAGFIPIRKRGKLPHDTVRIAYSLEYGVDEMEMHRDAVVPGDKVILVDDLIATGGTAEGAAKLLQQMGAEIVAACFIIDLPELGGRRKLEALGVNVRTLIEFEGH.

It belongs to the purine/pyrimidine phosphoribosyltransferase family. In terms of assembly, homodimer.

The protein resides in the cytoplasm. It carries out the reaction AMP + diphosphate = 5-phospho-alpha-D-ribose 1-diphosphate + adenine. The protein operates within purine metabolism; AMP biosynthesis via salvage pathway; AMP from adenine: step 1/1. In terms of biological role, catalyzes a salvage reaction resulting in the formation of AMP, that is energically less costly than de novo synthesis. The sequence is that of Adenine phosphoribosyltransferase from Sinorhizobium medicae (strain WSM419) (Ensifer medicae).